A 221-amino-acid chain; its full sequence is Superoxide dismutase [Mn] 1, mitochondrial (221 aa).

A mitochondrion-targeting transit peptide spans 1 to 24 (MLQNTVRCVSKLVQPITGVAAVRS). Residues His-50, His-98, Asp-182, and His-186 each contribute to the Mn(2+) site.

Belongs to the iron/manganese superoxide dismutase family. Homotetramer. The cofactor is Mn(2+).

Its subcellular location is the mitochondrion matrix. The catalysed reaction is 2 superoxide + 2 H(+) = H2O2 + O2. Its function is as follows. Destroys superoxide anion radicals which are normally produced within the cells and which are toxic to biological systems. In Caenorhabditis elegans, this protein is Superoxide dismutase [Mn] 1, mitochondrial (sod-2).